The chain runs to 379 residues: Alcohol dehydrogenase 2 (379 aa).

Zn(2+) contacts are provided by Cys47, Thr49, His69, Cys99, Cys102, Cys105, Cys113, and Cys177. An alcohol-binding residues include Thr49 and His69. Position 49 (Thr49) interacts with NAD(+). NAD(+) is bound by residues 202-207 (GLGAVG), Asp226, Lys231, Thr272, Val295, 295-297 (VGV), Phe322, and Arg372.

It belongs to the zinc-containing alcohol dehydrogenase family. As to quaternary structure, homodimer. Zn(2+) serves as cofactor.

The protein resides in the cytoplasm. The enzyme catalyses a primary alcohol + NAD(+) = an aldehyde + NADH + H(+). The catalysed reaction is a secondary alcohol + NAD(+) = a ketone + NADH + H(+). This Zea mays (Maize) protein is Alcohol dehydrogenase 2 (ADH2).